Reading from the N-terminus, the 112-residue chain is T cell receptor alpha variable 30 (112 aa).

The N-terminal stretch at 1-21 is a signal peptide; it reads METLLKVLSGTLLWQLTWVRS. Residues 24 to 112 enclose the Ig-like domain; the sequence is PVQSPQAVIL…YSGTYFCGTE (89 aa). The N-linked (GlcNAc...) asparagine glycan is linked to N42. A disulfide bridge connects residues C43 and C109.

In terms of assembly, alpha-beta TR is a heterodimer composed of an alpha and beta chain; disulfide-linked. The alpha-beta TR is associated with the transmembrane signaling CD3 coreceptor proteins to form the TR-CD3 (TcR or TCR). The assembly of alpha-beta TR heterodimers with CD3 occurs in the endoplasmic reticulum where a single alpha-beta TR heterodimer associates with one CD3D-CD3E heterodimer, one CD3G-CD3E heterodimer and one CD247 homodimer forming a stable octameric structure. CD3D-CD3E and CD3G-CD3E heterodimers preferentially associate with TR alpha and TR beta chains, respectively. The association of the CD247 homodimer is the last step of TcR assembly in the endoplasmic reticulum and is required for transport to the cell surface.

The protein resides in the cell membrane. V region of the variable domain of T cell receptor (TR) alpha chain that participates in the antigen recognition. Alpha-beta T cell receptors are antigen specific receptors which are essential to the immune response and are present on the cell surface of T lymphocytes. Recognize peptide-major histocompatibility (MH) (pMH) complexes that are displayed by antigen presenting cells (APC), a prerequisite for efficient T cell adaptive immunity against pathogens. Binding of alpha-beta TR to pMH complex initiates TR-CD3 clustering on the cell surface and intracellular activation of LCK that phosphorylates the ITAM motifs of CD3G, CD3D, CD3E and CD247 enabling the recruitment of ZAP70. In turn ZAP70 phosphorylates LAT, which recruits numerous signaling molecules to form the LAT signalosome. The LAT signalosome propagates signal branching to three major signaling pathways, the calcium, the mitogen-activated protein kinase (MAPK) kinase and the nuclear factor NF-kappa-B (NF-kB) pathways, leading to the mobilization of transcription factors that are critical for gene expression and essential for T cell growth and differentiation. The T cell repertoire is generated in the thymus, by V-(D)-J rearrangement. This repertoire is then shaped by intrathymic selection events to generate a peripheral T cell pool of self-MH restricted, non-autoaggressive T cells. Post-thymic interaction of alpha-beta TR with the pMH complexes shapes TR structural and functional avidity. The protein is T cell receptor alpha variable 30 of Homo sapiens (Human).